We begin with the raw amino-acid sequence, 302 residues long: Beta-casein (302 aa).

The first 15 residues, 1–15, serve as a signal peptide directing secretion; it reads MKLLILTCLVALGFA. 2 positions are modified to phosphoserine: S23 and S25. 16 tandem repeats follow at residues 144-151, 152-159, 160-167, 168-175, 176-182, 183-190, 191-198, 199-204, 205-214, 215-222, 223-230, 231-238, 241-247, 248-255, 256-262, and 263-269. Residues 144-269 are 16 X approximate tandem repeats; it reads KREMLPIYER…LLPEEILPVN (126 aa).

It belongs to the beta-casein family. In terms of tissue distribution, mammary gland specific. Secreted in milk.

The protein localises to the secreted. Its function is as follows. Important role in determination of the surface properties of the casein micelles. In Notamacropus eugenii (Tammar wallaby), this protein is Beta-casein (CSN2).